We begin with the raw amino-acid sequence, 49 residues long: YLDHWLGAPAPYPDPLEPRREVCELNPDCDELADHIGFQEAYRRFYGPV.

The 47-residue stretch at 1-47 (YLDHWLGAPAPYPDPLEPRREVCELNPDCDELADHIGFQEAYRRFYG) folds into the Gla domain. Pro9 is subject to Hydroxyproline. 4 residues coordinate Ca(2+): Glu17, Glu21, Glu24, and Asp30. 4-carboxyglutamate occurs at positions 17, 21, and 24. The cysteines at positions 23 and 29 are disulfide-linked.

It belongs to the osteocalcin/matrix Gla protein family. Post-translationally, gamma-carboxyglutamate residues are formed by vitamin K dependent carboxylation by GGCX. These residues are essential for the binding of calcium. Decarboxylation promotes the hormone activity.

It is found in the secreted. The carboxylated form is one of the main organic components of the bone matrix, which constitutes 1-2% of the total bone protein. It acts as a negative regulator of bone formation and is required to limit bone formation without impairing bone resorption or mineralization. The carboxylated form binds strongly to apatite and calcium. In terms of biological role, the uncarboxylated form acts as a hormone secreted by osteoblasts, which regulates different cellular processes, such as energy metabolism, male fertility and brain development. Regulates of energy metabolism by acting as a hormone favoring pancreatic beta-cell proliferation, insulin secretion and sensitivity and energy expenditure. Uncarboxylated osteocalcin hormone also promotes testosterone production in the testes: acts as a ligand for G protein-coupled receptor GPRC6A at the surface of Leydig cells, initiating a signaling response that promotes the expression of enzymes required for testosterone synthesis in a CREB-dependent manner. Also acts as a regulator of brain development: osteocalcin hormone crosses the blood-brain barrier and acts as a ligand for GPR158 on neurons, initiating a signaling response that prevents neuronal apoptosis in the hippocampus, favors the synthesis of all monoamine neurotransmitters and inhibits that of gamma-aminobutyric acid (GABA). Osteocalcin also crosses the placenta during pregnancy and maternal osteocalcin is required for fetal brain development. This Equus caballus (Horse) protein is Osteocalcin (BGLAP).